The chain runs to 552 residues: Cation transporter HKT1;1 (552 aa).

The Cytoplasmic portion of the chain corresponds to 1-70 (MHPPSLVLDT…QSYSFLVCKS (70 aa)). Helical transmembrane passes span 71–91 (NPLVVQLVYFVIISFAGFLAL) and 133–153 (LWVLILLMLMGGEVFTSMLGL). The Cytoplasmic portion of the chain corresponds to 154-221 (YFNNANANRN…TYNPCAVLVR (68 aa)). A run of 2 helical transmembrane segments spans residues 222-242 (IVTGYFVATVISSSVIIIIYF) and 291-311 (VLLLLVIPQILAGNTLFSPLL). At 312 to 348 (RLCVWVLGKVSGKAEYAYILQHPGETGYKHLHVRRNS) the chain is on the cytoplasmic side. The next 2 helical transmembrane spans lie at 349-369 (VYIVLSVTGLILLQVMFICSF) and 402-422 (ILDISTLSPSTLLLFAVVMYL). Over 423–448 (PSDASFLTANADNQPLTDKKTNSISR) the chain is Cytoplasmic. 2 helical membrane passes run 449-471 (ALWRNFTVNKLSCLAMFTFLACI) and 524-544 (GFVGRWTEEGKLIVILVMFLG). Over 545–552 (RLKEFILK) the chain is Cytoplasmic.

The protein belongs to the TrkH potassium transport family. HKT (TC 2.A.38.3) subfamily. Expressed in shoots. In roots, expressed in epidermis, exodermis, cortex, and sieve elements and companion cells of phloem. In mature leaves, expressed in large highly vacuolated cells of the adaxial epidermis, phloem and xylem.

The protein resides in the membrane. The catalysed reaction is Na(+)(in) = Na(+)(out). Functionally, functions as a low-affinity sodium transporter. This Oryza sativa subsp. japonica (Rice) protein is Cation transporter HKT1;1.